We begin with the raw amino-acid sequence, 313 residues long: Ribosomal RNA small subunit methyltransferase H (313 aa).

S-adenosyl-L-methionine-binding positions include 35-37, D55, F79, D100, and Q107; that span reads GGH.

It belongs to the methyltransferase superfamily. RsmH family.

The protein resides in the cytoplasm. It catalyses the reaction cytidine(1402) in 16S rRNA + S-adenosyl-L-methionine = N(4)-methylcytidine(1402) in 16S rRNA + S-adenosyl-L-homocysteine + H(+). Functionally, specifically methylates the N4 position of cytidine in position 1402 (C1402) of 16S rRNA. In Burkholderia pseudomallei (strain K96243), this protein is Ribosomal RNA small subunit methyltransferase H.